The chain runs to 979 residues: Probable serine/threonine-protein kinase iksA (979 aa).

N-linked (GlcNAc...) asparagine glycans are attached at residues N32, N110, N120, N121, N147, N155, N161, N220, N231, and N243. Residues 207–245 (SKSGVNNNNNNNNNDSTTTNNNNNNNTTPPQQQQQQNSS) are disordered. Residues 212–244 (NNNNNNNNNDSTTTNNNNNNNTTPPQQQQQQNS) are compositionally biased toward low complexity. Residues 261-568 (FKEDIKIGSG…ISQILSTHFI (308 aa)) enclose the Protein kinase domain. Residues 267 to 275 (IGSGGFGSV) and K293 contribute to the ATP site. D397 acts as the Proton acceptor in catalysis. 7 N-linked (GlcNAc...) asparagine glycosylation sites follow: N592, N597, N615, N645, N646, N663, and N699. The segment covering 593–602 (TSVHNTTAST) has biased composition (polar residues). The segment at 593–666 (TSVHNTTAST…LGNNNNNNTN (74 aa)) is disordered. Residues 610 to 666 (SISTTNSTTSSSSSTATSSSLSSTTIATTSSSNAINNTTATTTTNSNLGNNNNNNTN) are compositionally biased toward low complexity. Residues 713–727 (NDDIIIDDDDDDDDS) are compositionally biased toward acidic residues. Residues 713-793 (NDDIIIDDDD…GNNGIRKALP (81 aa)) are disordered. Composition is skewed to low complexity over residues 728-737 (TNNNDTNNTD) and 753-773 (NNKKSSYSRSSSIRSPSSSNK). N-linked (GlcNAc...) asparagine glycans are attached at residues N731 and N734. Residues 846-866 (FPSPILLYPLLLLSLIPILVV) traverse the membrane as a helical segment. Residues N870 and N894 are each glycosylated (N-linked (GlcNAc...) asparagine). Transmembrane regions (helical) follow at residues 912 to 932 (INTIISIIRFIYYFVISVLLP) and 956 to 976 (FPLLSLFKNLTLLIINLIFIF).

Belongs to the protein kinase superfamily. Ser/Thr protein kinase family.

Its subcellular location is the membrane. The enzyme catalyses L-seryl-[protein] + ATP = O-phospho-L-seryl-[protein] + ADP + H(+). It catalyses the reaction L-threonyl-[protein] + ATP = O-phospho-L-threonyl-[protein] + ADP + H(+). This is Probable serine/threonine-protein kinase iksA (iksA) from Dictyostelium discoideum (Social amoeba).